The chain runs to 219 residues: Leukocyte surface antigen CD53 (219 aa).

The Cytoplasmic segment spans residues 1-11 (MGMSSLKLLKY). Residues 12–32 (VLFIFNLLFWVCGCCILGFGI) traverse the membrane as a helical segment. Residues 33-54 (YFLVQNTYGVLFRNLPFLTLGN) are Extracellular-facing. The helical transmembrane segment at 55-69 (ILVIVGSIIMVVAFL) threads the bilayer. At 70-80 (GCMGSIKENKC) the chain is on the cytoplasmic side. A helical membrane pass occupies residues 81–106 (LLMSFFVLLLIILLAEVTIAILLFVY). Residues 107-181 (EQKLNTLVAE…NKAKSWFHSN (75 aa)) lie on the Extracellular side of the membrane. N-linked (GlcNAc...) asparagine glycans are attached at residues Asn-119, Asn-129, and Asn-148. A helical transmembrane segment spans residues 182–206 (FLYIGIITICVCVIQVLGMSFALTL). Residues 207 to 219 (NCQIDKTSQALGL) are Cytoplasmic-facing.

Belongs to the tetraspanin (TM4SF) family. Interacts with SCIMP. Interacts with CD45/PTPRC. Interacts with IL7R. Interacts with RBL2 and PPP2CA.

The protein localises to the cell membrane. The protein resides in the cell junction. It is found in the membrane. Functionally, structural component of specialized membrane microdomains known as tetraspanin-enriched microdomains (TERMs), which act as platforms for receptor clustering and signaling. Participates thereby in diverse biological functions such as cell signal transduction, adhesion, migration and protein trafficking. Plays a role in the activation of monocytes and B-cells. Acts as an essential regulator of B-cell development by promoting interleukin-7 receptor/IL7R signaling. Also promotes, in B-cells, the BCR signaling by recruiting PKC to the plasma membrane in order to phosphorylate its substrates. Plays an essential role in lymphocyte homing to lymph nodes by stabilizing L-selectin/SELL cell surface expression. Also mediates metabolic and inflammatory functions in hepatocytes and adipose tissue by promoting TNF-alpha and LPS signaling independent of the immune compartment. Protects hematopoietic stem cell function in response to stress by facilitating DREAM complex activity through association with p130/RBL2 and its phosphatase PP2A. The protein is Leukocyte surface antigen CD53 (Cd53) of Mus musculus (Mouse).